The primary structure comprises 185 residues: UPF0669 protein C6orf120 homolog (185 aa).

The first 23 residues, 1–23 (MATPWRRALLMILASQVVTLVKC), serve as a signal peptide directing secretion. N47 is a glycosylation site (N-linked (GlcNAc...) asparagine).

This sequence belongs to the UPF0669 family.

It is found in the secreted. May be involved in induction of apoptosis in CD4(+) T-cells, but not CD8(+) T-cells or hepatocytes. The protein is UPF0669 protein C6orf120 homolog of Mus musculus (Mouse).